A 316-amino-acid polypeptide reads, in one-letter code: Olfactory receptor 4N4 (316 aa).

At 1–25 (MKIANNTVVTEFILLGLTQSQDIQL) the chain is on the extracellular side. Asparagine 5 is a glycosylation site (N-linked (GlcNAc...) asparagine). The chain crosses the membrane as a helical span at residues 26 to 49 (LVFVLILIFYLIILPGNFLIIFTI). Residues 50-57 (RSDPGLTA) are Cytoplasmic-facing. The helical transmembrane segment at 58 to 79 (PLYLFLGNLAFLDASYSFIVAP) threads the bilayer. At 80–100 (RMLVDFLSEKKVISYRGCITQ) the chain is on the extracellular side. Residues cysteine 97 and cysteine 189 are joined by a disulfide bond. Residues 101–120 (LFFLHFLGGGEGLLLVVMAF) traverse the membrane as a helical segment. Residues 121–139 (DRYIAICRPLHCSTVMNPR) lie on the Cytoplasmic side of the membrane. The chain crosses the membrane as a helical span at residues 140–158 (ACYAMMLALWLGGFVHSII). Residues 159–195 (QVVLILRLPFCGPNQLDNFFCDVRQVIKLACTDMFVV) are Extracellular-facing. The chain crosses the membrane as a helical span at residues 196–219 (ELLMVFNSGLMTLLCFLGLLASYA). At 220–235 (VILCHVRRAASEGKNK) the chain is on the cytoplasmic side. A helical membrane pass occupies residues 236 to 258 (AMSTCTTRVIIILLMFGPAIFIY). Residues 259–269 (MCPFRALPADK) are Extracellular-facing. A helical membrane pass occupies residues 270 to 289 (MVSLFHTVIFPLMNPMIYTL). The Cytoplasmic portion of the chain corresponds to 290–316 (RNQEVKTSMKRLLSRHVVCQVDFIIRN).

It belongs to the G-protein coupled receptor 1 family.

The protein localises to the cell membrane. Odorant receptor. This chain is Olfactory receptor 4N4 (OR4N4), found in Homo sapiens (Human).